A 211-amino-acid polypeptide reads, in one-letter code: Urease accessory protein UreF (211 aa).

The tract at residues 68–93 (LAPDGADRETDARTPSPAARDASRSQ) is disordered.

It belongs to the UreF family. In terms of assembly, ureD, UreF and UreG form a complex that acts as a GTP-hydrolysis-dependent molecular chaperone, activating the urease apoprotein by helping to assemble the nickel containing metallocenter of UreC. The UreE protein probably delivers the nickel.

The protein resides in the cytoplasm. Required for maturation of urease via the functional incorporation of the urease nickel metallocenter. This Mycobacterium marinum (strain ATCC BAA-535 / M) protein is Urease accessory protein UreF.